A 511-amino-acid chain; its full sequence is Dihydrolipoyl dehydrogenase, mitochondrial (511 aa).

FAD is bound by residues 75–84 (EKRGTLGGTC), Lys93, Gly157, and 187–189 (TGS). A disulfide bridge connects residues Cys84 and Cys89. Residues 224 to 231 (GGGIIGLE), Glu247, Leu281, and Gly316 contribute to the NAD(+) site. Residues Asp357 and 363–366 (MLAH) contribute to the FAD site. The Proton acceptor role is filled by His489.

Belongs to the class-I pyridine nucleotide-disulfide oxidoreductase family. In terms of assembly, homodimer. FAD is required as a cofactor.

The protein localises to the mitochondrion matrix. The enzyme catalyses N(6)-[(R)-dihydrolipoyl]-L-lysyl-[protein] + NAD(+) = N(6)-[(R)-lipoyl]-L-lysyl-[protein] + NADH + H(+). In terms of biological role, lipoamide dehydrogenase is a component of the alpha-ketoacid dehydrogenase complexes. Malfunction of this protein blocks the progression of cell cycle from G1 to S phase. This chain is Dihydrolipoyl dehydrogenase, mitochondrial (dld1), found in Schizosaccharomyces pombe (strain 972 / ATCC 24843) (Fission yeast).